A 545-amino-acid chain; its full sequence is MDFKRLTAFFAIALVIMIGWEKMFPTPKPVPAPQQTAQQQAVTASAEAALAPATPITVTTDTVQAVIDEKSGDLRRLTLLKYKATGDENKPFILFGDGKEYTYVAQSELLDAQGNNILKGIGFSAPKKQYSLEGDKVEVRLSAPETRGLKIDKVYTFTKGSYLVNVRFDIANGSGQTANLSADYRIVRDHSEPEGQGYFTHSYVGPVVYTPEGNFQKVSFSDLDDDAKSGKSEAEYIRKTPTGWLGMIEHHFMSTWILQPKGGQSVCAAGDCRIDIKRRNDKLYSTSVSVPLAAIQNGAKSEASINLYAGPQTTSVIANIADNLQLAKDYGKVHWFASPLFWLLNQLHNIIGNWGWAIIVLTIIVKAVLYPLTNASYRSMAKMRAAAPKLQAIKEKYGDDRMAQQQAMMQLYTDEKINPLGGCLPMLLQIPVFIGLYWALFASVELRQAPWLGWITDLSRADPYYILPIIMAATMFAQTYLNPPPTDPMQAKMMKIMPLVFSVMFFFFPAGLVLYWVINNLLTIAQQWHINRSIEKQRAQGEVVS.

Helical transmembrane passes span 350 to 370 (IIGNWGWAIIVLTIIVKAVLY), 424 to 444 (LPMLLQIPVFIGLYWALFASV), 461 to 481 (ADPYYILPIIMAATMFAQTYL), and 498 to 518 (PLVFSVMFFFFPAGLVLYWVI).

The protein belongs to the OXA1/ALB3/YidC family. Type 1 subfamily. Interacts with the Sec translocase complex via SecD. Specifically interacts with transmembrane segments of nascent integral membrane proteins during membrane integration.

It localises to the cell inner membrane. Functionally, required for the insertion and/or proper folding and/or complex formation of integral membrane proteins into the membrane. Involved in integration of membrane proteins that insert both dependently and independently of the Sec translocase complex, as well as at least some lipoproteins. Aids folding of multispanning membrane proteins. The protein is Membrane protein insertase YidC of Neisseria meningitidis serogroup A / serotype 4A (strain DSM 15465 / Z2491).